A 1231-amino-acid polypeptide reads, in one-letter code: Cohesin subunit SA-2 (1231 aa).

An N-acetylmethionine modification is found at Met1. A disordered region spans residues 1–75 (MIAAPEIPTD…GPNRMNGHHQ (75 aa)). Residues 36–48 (KQGKGKTCKKGKK) show a composition bias toward basic residues. An SCD domain is found at 293 to 378 (FVHRYRDAIA…SRFKDRIVSM (86 aa)). Position 607 is an N6-acetyllysine (Lys607). Phosphoserine is present on residues Ser1058, Ser1061, Ser1064, and Ser1065. Positions 1064 to 1083 (SSRGSTVRSKKSKPSTGKRK) are disordered. The span at 1071–1082 (RSKKSKPSTGKR) shows a compositional bias: basic residues. Phosphothreonine is present on Thr1112. Phosphoserine is present on residues Ser1177 and Ser1178.

Belongs to the SCC3 family. As to quaternary structure, interacts directly with RAD21 in cohesin complex. Cohesin complexes are composed of a heterodimer between a SMC1 protein (SMC1A or SMC1B) and SMC3, which are attached via their hinge domain, and RAD21 which link them at their heads, and one STAG protein (STAG1, STAG2 or STAG3). In cohesin complexes, STAG2 is mutually exclusive with STAG1 and STAG3. In terms of processing, phosphorylated by PLK1. The large dissociation of cohesin from chromosome arms during prophase is partly due to its phosphorylation.

It localises to the nucleus. It is found in the chromosome. Its subcellular location is the centromere. Functionally, component of cohesin complex, a complex required for the cohesion of sister chromatids after DNA replication. The cohesin complex apparently forms a large proteinaceous ring within which sister chromatids can be trapped. At anaphase, the complex is cleaved and dissociates from chromatin, allowing sister chromatids to segregate. The cohesin complex may also play a role in spindle pole assembly during mitosis. In Homo sapiens (Human), this protein is Cohesin subunit SA-2 (STAG2).